Consider the following 480-residue polypeptide: Thyroid receptor-interacting protein 6 (480 aa).

A compositionally biased stretch (pro residues) spans 1-12; that stretch reads MSGPTWLPPKQP. Residues 1–43 are disordered; the sequence is MSGPTWLPPKQPEPSRLPQGRSLPRGALGPPTAHGATLQPHPR. Position 25 is an asymmetric dimethylarginine; alternate (arginine 25). Arginine 25 bears the Omega-N-methylarginine; alternate mark. Tyrosine 55 is modified (phosphotyrosine; by SRC). A disordered region spans residues 57–84; that stretch reads PPGVPEDRGPTWVGSHGTPQRLQGLPPD. Phosphoserine is present on serine 92. Residues 107–134 form a disordered region; it reads LDGGRSHAPRRPDRQAFEAPPPHAYRGG. A compositionally biased stretch (basic and acidic residues) spans 108 to 122; that stretch reads DGGRSHAPRRPDRQA. Omega-N-methylarginine is present on residues arginine 111, arginine 183, and arginine 190. At serine 193 the chain carries Phosphoserine. Arginine 209 and arginine 242 each carry omega-N-methylarginine. Residues 218 to 257 are disordered; sequence RSHREPGPGVPEGPSGVHIPAGGGRGGGHEPQGPLGQPPE. The span at 238-247 shows a compositional bias: gly residues; sequence AGGGRGGGHE. LIM zinc-binding domains follow at residues 281-339, 341-401, and 404-471; these read GRCG…YVAT, EKCS…KFAP, and SVCG…RIQE. The interval 473-480 is interaction with MAGI1 and PTPN13; sequence SATVTTDC.

The protein belongs to the zyxin/ajuba family. In terms of assembly, specifically interacts with the ligand binding domain of the thyroid receptor (TR) in the presence of thyroid hormone. Interacts (via the third LIM domain and C-terminus) with PTPN13 (via the second PDZ domain). Interacts (via the second LIM domain or via the third LIM domain plus C-terminus) with PDLIM4 (via PDZ domain). Found in a complex with PTPN13 and PDLIM4. Interacts with SVIL isoform 2. Interacts with LPAR2 but not other LPA receptors. Interacts with PRKAA2. Interacts with MAGI1. Interacts with SCRIB. In case of infection, interacts with S.typhimurium protein sseI. In terms of processing, phosphorylation at Tyr-55 by SRC is required for enhancement of lysophosphatidic acid-induced cell migration. Tyr-55 is dephosphorylated by PTPN13. Highly expressed in kidney, stomach, lung, heart and testis. Low expression levels in brain, colon, thymus, pancreas and skin. Not expressed in skeletal muscle.

It is found in the cytoplasm. Its subcellular location is the cytoskeleton. The protein localises to the cell junction. The protein resides in the focal adhesion. It localises to the nucleus. Functionally, relays signals from the cell surface to the nucleus to weaken adherens junction and promote actin cytoskeleton reorganization and cell invasiveness. Involved in lysophosphatidic acid-induced cell adhesion and migration. Acts as a transcriptional coactivator for NF-kappa-B and JUN, and mediates the transrepression of these transcription factors induced by glucocorticoid receptor. This is Thyroid receptor-interacting protein 6 (Trip6) from Mus musculus (Mouse).